Reading from the N-terminus, the 188-residue chain is Putative manganese efflux pump MntP (188 aa).

Transmembrane regions (helical) follow at residues 3-23 (LYALLLVALGMSMDAFAVALA), 35-55 (IAATALVFGTVEAFMPLAGWV), 63-83 (FISEWDHWVAFVLLGGLGLKM), 104-126 (WMTVLTAFGTSIDSMIVGVGLAF), 140-160 (MAATVMVTIGLTAGKAFGVLF), and 167-187 (AGGLVLIAIGTWTLLSHLGLI).

It belongs to the MntP (TC 9.B.29) family.

The protein resides in the cell inner membrane. In terms of biological role, probably functions as a manganese efflux pump. The sequence is that of Putative manganese efflux pump MntP from Neisseria gonorrhoeae (strain ATCC 700825 / FA 1090).